Here is a 194-residue protein sequence, read N- to C-terminus: Protein LURP-one-related 10 (194 aa).

Belongs to the LOR family.

Might be related to the phospholipid scramblase and tubby-like superfamily of membrane tethered transcription factors. The chain is Protein LURP-one-related 10 from Arabidopsis thaliana (Mouse-ear cress).